We begin with the raw amino-acid sequence, 346 residues long: Putative serine/threonine-protein kinase K06H7.1 (346 aa).

A Protein kinase domain is found at 20–287 (YKVVQKLGEG…KLFKLLEDVM (268 aa)). Residues 26-34 (LGEGGCGSV) and Lys-50 contribute to the ATP site. Catalysis depends on Asp-141, which acts as the Proton acceptor. Residues 302-326 (PEKKKNPASQGNKFGLGKKGTKESG) are disordered.

This sequence belongs to the protein kinase superfamily. Ser/Thr protein kinase family.

The enzyme catalyses L-seryl-[protein] + ATP = O-phospho-L-seryl-[protein] + ADP + H(+). It catalyses the reaction L-threonyl-[protein] + ATP = O-phospho-L-threonyl-[protein] + ADP + H(+). The sequence is that of Putative serine/threonine-protein kinase K06H7.1 from Caenorhabditis elegans.